We begin with the raw amino-acid sequence, 340 residues long: DNA-directed RNA polymerase subunit alpha (340 aa).

Residues 1-236 are alpha N-terminal domain (alpha-NTD); that stretch reads MLSLSKNWNT…EQLQLFISFE (236 aa). Residues 251 to 340 form an alpha C-terminal domain (alpha-CTD) region; that stretch reads FAPYLLKRVD…LSKRYEDSYN (90 aa).

The protein belongs to the RNA polymerase alpha chain family. Homodimer. The RNAP catalytic core consists of 2 alpha, 1 beta, 1 beta' and 1 omega subunit. When a sigma factor is associated with the core the holoenzyme is formed, which can initiate transcription.

The catalysed reaction is RNA(n) + a ribonucleoside 5'-triphosphate = RNA(n+1) + diphosphate. DNA-dependent RNA polymerase catalyzes the transcription of DNA into RNA using the four ribonucleoside triphosphates as substrates. This chain is DNA-directed RNA polymerase subunit alpha, found in Rickettsia peacockii (strain Rustic).